The following is an 838-amino-acid chain: Multiphosphoryl transfer protein (838 aa).

The PTS EIIA type-2 domain maps to 7-147; the sequence is APVTPDLVRL…AVIVAALTGD (141 aa). H67 serves as the catalytic Tele-phosphohistidine intermediate; for EIIA activity. H67 is modified (phosphohistidine; by HPr). The 93-residue stretch at 161–253 folds into the HPr domain; it reads AERFEWTIAY…LTAQEKADAE (93 aa). The active-site Pros-phosphohistidine intermediate; for HPr activity is H175. H175 is subject to Phosphohistidine; by EI. The tract at residues 274-838 is PTS EI; the sequence is AIVGIGASPG…ALEAQREGQA (565 aa). Catalysis depends on H460, which acts as the Tele-phosphohistidine intermediate; for PTS EI activity. H460 bears the Phosphohistidine; by autocatalysis mark. 2 residues coordinate phosphoenolpyruvate: R567 and R603. E697 and D721 together coordinate Mg(2+). Phosphoenolpyruvate is bound by residues 720–721 and R731; that span reads ND. C768 acts as the Proton donor in catalysis.

It belongs to the PEP-utilizing enzyme family. Mg(2+) serves as cofactor.

The protein localises to the cytoplasm. The catalysed reaction is L-histidyl-[protein] + phosphoenolpyruvate = N(pros)-phospho-L-histidyl-[protein] + pyruvate. The phosphoenolpyruvate-dependent sugar phosphotransferase system (sugar PTS), a major carbohydrate active transport system, catalyzes the phosphorylation of incoming sugar substrates concomitantly with their translocation across the cell membrane. The enzyme II FruAB PTS system is involved in fructose transport. This chain is Multiphosphoryl transfer protein, found in Xanthomonas campestris pv. campestris (strain ATCC 33913 / DSM 3586 / NCPPB 528 / LMG 568 / P 25).